The following is a 157-amino-acid chain: MRCPKCGATKSSVIDSRQAEEGNTIRRRRECDECQHRFTTYERVEERTLVVVKKDGTREQFSRDKIFNGIIRSAQKRPVSSDEINMVVNRIEQKLRGRNENEIQSEDIGSLVMEELAELDEITYVRFASVYRSFKDVSELESLLQQITQSSKKKKER.

Residues Met-1 to Gly-22 are disordered. A zinc finger spans residues Cys-3–Cys-34. Residues Leu-49–Glu-139 enclose the ATP-cone domain.

Belongs to the NrdR family. Requires Zn(2+) as cofactor.

Its function is as follows. Negatively regulates transcription of bacterial ribonucleotide reductase nrd genes and operons by binding to NrdR-boxes. The protein is Transcriptional repressor NrdR of Streptococcus pneumoniae (strain Hungary19A-6).